The following is a 1040-amino-acid chain: Tudor domain-containing protein 5 (1040 aa).

HTH OST-type domains are found at residues 7–80 (IQDC…KAIP), 122–197 (VPPI…LKKS), and 291–365 (VDPE…FDAD). The Tudor domain maps to 533 to 592 (FIQPGHLCCVKISEDKWWYRVIIHRILGKKEVEVFYPDFGNIGTVQKSSLRFLKCCYTKL). At Ser809 the chain carries Phosphoserine. 2 disordered regions span residues 857–891 (DVKG…YPLD) and 912–975 (AERS…AKDK). 2 stretches are compositionally biased toward polar residues: residues 872–891 (EKNT…YPLD) and 912–924 (AERS…SIQT). Ser943 carries the phosphoserine modification. Positions 946 to 956 (NHSGSVESSPG) are enriched in polar residues. Residues 958 to 975 (LKKEDVSNSRAEATAKDK) are compositionally biased toward basic and acidic residues.

This sequence belongs to the TDRD5 family. As to expression, gonad-specific. Mainly expressed in testis. Present at low level in ovary (at protein level).

It localises to the cytoplasm. Required during spermiogenesis to participate in the repression transposable elements and prevent their mobilization, which is essential for the germline integrity. Probably acts via the piRNA metabolic process, which mediates the repression of transposable elements during meiosis by forming complexes composed of piRNAs and Piwi proteins and govern the methylation and subsequent repression of transposons. Required for chromatoid body (CB) assembly. The protein is Tudor domain-containing protein 5 (Tdrd5) of Mus musculus (Mouse).